The sequence spans 99 residues: uncharacterized protein (99 aa).

Positions 3–68 (ERLKAITNLL…EKFDSNRKFY (66 aa)) form a coiled coil.

This is an uncharacterized protein from Aquifex aeolicus (strain VF5).